A 346-amino-acid chain; its full sequence is MVSARPAFISGGPSTGGWRPTRQAAERTGGPEHSIEEVAGRGAPGHRSAEGWLRGKTLAPQRKREAIRRMLEHTPLSERRACRLAGLSRDAFRHAPVPTPATQALSARLVELAQTHRRFGYRRLHDLLRPEFPSVNHKKIYRLYEEAELKVRKRRKAKRPVGERQKLLASSMPNDTWSMDFVFDALANARRIKCLTVVDDFTRESVDIAVDHGISGAYVVRLLDQAACFRGYPRAVRTDNGPEFTSRAFIAWTQQHGIEHILIEPGAPTQNAYIESFNGKFRDECLNEHWFTSLAQARDVIADWRRHYNQIRPHSSCGRIPPAQFAANYRTQQANNAVPFNPGLYQ.

The interval 1–50 (MVSARPAFISGGPSTGGWRPTRQAAERTGGPEHSIEEVAGRGAPGHRSAE) is disordered. A compositionally biased stretch (basic and acidic residues) spans 29-39 (GGPEHSIEEVA). An Integrase catalytic domain is found at 169 to 329 (ASSMPNDTWS…IPPAQFAANY (161 aa)).

This Xanthomonas euvesicatoria protein is Insertion element IS476 uncharacterized 39.2 kDa protein.